The following is a 457-amino-acid chain: MADS-box transcription factor 1 (457 aa).

In terms of domain architecture, MADS-box spans Pro-11 to Glu-71. Disordered stretches follow at residues Ser-195 to His-278 and Ser-295 to Glu-328. The span at Ser-199–Glu-216 shows a compositional bias: low complexity. The segment covering Leu-218 to Asn-234 has biased composition (polar residues). A compositionally biased stretch (basic residues) spans Lys-265–His-278. The span at Ser-295–Thr-317 shows a compositional bias: polar residues. Ser-372 is subject to Phosphoserine.

In terms of processing, phosphorylated. Occurs periodically during mitosis.

The protein localises to the nucleus. Its function is as follows. Acts as a transcriptional activator with a role in the regulation of mitosis. Regulates septation and the periodic transcription of cdc15. This is MADS-box transcription factor 1 (mbx1) from Schizosaccharomyces pombe (strain 972 / ATCC 24843) (Fission yeast).